Reading from the N-terminus, the 77-residue chain is Acyl carrier protein (77 aa).

In terms of domain architecture, Carrier spans 2–77 (SNIEERVKKI…AAIDYVSKNQ (76 aa)). Residue Ser37 is modified to O-(pantetheine 4'-phosphoryl)serine.

The protein belongs to the acyl carrier protein (ACP) family. 4'-phosphopantetheine is transferred from CoA to a specific serine of apo-ACP by AcpS. This modification is essential for activity because fatty acids are bound in thioester linkage to the sulfhydryl of the prosthetic group.

Its subcellular location is the cytoplasm. The protein operates within lipid metabolism; fatty acid biosynthesis. Functionally, carrier of the growing fatty acid chain in fatty acid biosynthesis. This chain is Acyl carrier protein, found in Shewanella denitrificans (strain OS217 / ATCC BAA-1090 / DSM 15013).